We begin with the raw amino-acid sequence, 113 residues long: Hydrogenase maturation factor HypA (113 aa).

His-2 provides a ligand contact to Ni(2+). Zn(2+)-binding residues include Cys-73, Cys-76, Cys-89, and Cys-92.

It belongs to the HypA/HybF family.

In terms of biological role, involved in the maturation of [NiFe] hydrogenases. Required for nickel insertion into the metal center of the hydrogenase. The polypeptide is Hydrogenase maturation factor HypA (Alkalilimnicola ehrlichii (strain ATCC BAA-1101 / DSM 17681 / MLHE-1)).